We begin with the raw amino-acid sequence, 102 residues long: Iron-sulfur cluster assembly protein CyaY (102 aa).

It belongs to the frataxin family.

Involved in iron-sulfur (Fe-S) cluster assembly. May act as a regulator of Fe-S biogenesis. This Pasteurella multocida (strain Pm70) protein is Iron-sulfur cluster assembly protein CyaY.